The following is a 1229-amino-acid chain: Vacuolar protein sorting-associated protein 8 homolog (1229 aa).

The tract at residues 67 to 89 is disordered; that stretch reads EFGMPVPHATPTPSIGEDSTIRT. Residues 901-1063 form a CHCR repeat; sequence ETTRLLSLHY…ILPHQELQSI (163 aa). The RING-type; atypical zinc-finger motif lies at 1148–1189; sequence CSMCRQRLYDHSQVLIFGGCGHGIHEQCMEESETQFEECPRC.

It belongs to the VPS8 family. As to quaternary structure, component of the class C core vacuole/endosome tethering (CORVET) complex composed of at least Vps8, dor/Vps18, car/Vps33A and Vps16A; unlike in other species, Vps11 is not part of the Drosophila complex. Due to the reduced number of components the Drosophila CORVET complex is often referred to as the miniCORVET complex. Has a higher affinity than the homotypic fusion and vacuole protein sorting (HOPS) tethering complex-specific component lt/Vps41 for Vps16A, car/Vps33A and dor/Vps18, the core components shared by both tethering complexes.

It localises to the early endosome. Its function is as follows. Part of the class C core vacuole/endosome tethering (CORVET) complex involved in endo-lysosomal vesicle trafficking and lysosome biogenesis by facilitating docking and fusion of endosomal vesicles. The CORVET complex acts upstream of the homotypic fusion and vacuole protein sorting (HOPS) tethering complex but is not involved in autophagic flux. The CORVET complex may cooperate with the early endosomal tether Rbsn-5 to mediate endosomal fusion. As part of the CORVET complex recruited to endosomes by activated GTP-bound Rab5. Specifically required for endocytic trafficking in a subset of cells, such as hemocytes and nephrocytes, which are highly active in endocytosis. This is Vacuolar protein sorting-associated protein 8 homolog from Drosophila melanogaster (Fruit fly).